A 117-amino-acid polypeptide reads, in one-letter code: Putative hydrolase fragment YghX (117 aa).

The segment at 91–117 (DGLSSVGGYPGNDDKGRELQQQVDPTN) is disordered.

The sequence is that of Putative hydrolase fragment YghX (yghX) from Escherichia coli (strain K12).